The sequence spans 149 residues: MVFLSLSRWVRSRGPDRYWRVQEVLKHARHFRGRKNRCFSLAVRAVRRAFVYSTKARKAKKRIMRALWVSRIAGATREHGMKYPMLMSNLVKCQVALNRKVISDMSIYEPKTFKSLAALAKRRRDEGILAALGDGKEPEGIFSRVVNYH.

Residues 1–9 constitute a mitochondrion transit peptide; the sequence is MVFLSLSRW.

Belongs to the bacterial ribosomal protein bL20 family. As to quaternary structure, component of the mitochondrial ribosome large subunit (39S) which comprises a 16S rRNA and about 50 distinct proteins.

It is found in the mitochondrion. This chain is Large ribosomal subunit protein bL20m (mrpl20), found in Xenopus laevis (African clawed frog).